A 476-amino-acid polypeptide reads, in one-letter code: Raffinose invertase (476 aa).

Substrate contacts are provided by residues 35–38 (WMND), Gln-54, 97–98 (FS), 159–160 (RD), Glu-214, and Trp-297. Asp-38 is an active-site residue.

Belongs to the glycosyl hydrolase 32 family. As to quaternary structure, homodimer.

The enzyme catalyses Hydrolysis of terminal non-reducing beta-D-fructofuranoside residues in beta-D-fructofuranosides.. Its function is as follows. May prevent the potential hasard of excessive sucrose accumulation. In Escherichia coli, this protein is Raffinose invertase (rafD).